Here is a 164-residue protein sequence, read N- to C-terminus: Small ribosomal subunit protein uS9 (164 aa).

Belongs to the universal ribosomal protein uS9 family.

This is Small ribosomal subunit protein uS9 from Rickettsia bellii (strain OSU 85-389).